Consider the following 510-residue polypeptide: Cytochrome P450 monooxygenase AFLA_114810 (510 aa).

The N-terminal stretch at 1-17 (MLILLGLLCLYTGLYVA) is a signal peptide. C444 lines the heme pocket.

The protein belongs to the cytochrome P450 family. Heme is required as a cofactor.

Its pathway is secondary metabolite biosynthesis. Cytochrome P450 monooxygenase; part of the gene cluster 41 that mediates the biosynthesis of an extracellular and diffusible metabolite that is able to stimulate colony sclerotial production. This Aspergillus flavus (strain ATCC 200026 / FGSC A1120 / IAM 13836 / NRRL 3357 / JCM 12722 / SRRC 167) protein is Cytochrome P450 monooxygenase AFLA_114810.